The chain runs to 156 residues: Small ribosomal subunit protein uS7 (156 aa).

Belongs to the universal ribosomal protein uS7 family. Part of the 30S ribosomal subunit. Contacts proteins S9 and S11.

Its function is as follows. One of the primary rRNA binding proteins, it binds directly to 16S rRNA where it nucleates assembly of the head domain of the 30S subunit. Is located at the subunit interface close to the decoding center, probably blocks exit of the E-site tRNA. This Streptococcus uberis (strain ATCC BAA-854 / 0140J) protein is Small ribosomal subunit protein uS7.